A 510-amino-acid chain; its full sequence is Inositol-3-phosphate synthase (510 aa).

24 residues coordinate NAD(+): Gly-70, Gly-71, Asn-72, Asn-73, Asp-143, Ile-180, Gln-190, Arg-193, Thr-230, Ala-231, Asn-232, Thr-233, Gly-281, Ser-282, Asp-306, Ser-309, Asn-340, Asn-341, Asp-342, Lys-355, Gly-393, Asp-394, Asp-422, and Ser-423.

This sequence belongs to the myo-inositol 1-phosphate synthase family. Requires NAD(+) as cofactor.

The protein localises to the cytoplasm. The protein resides in the cytosol. It is found in the nucleus. The catalysed reaction is D-glucose 6-phosphate = 1D-myo-inositol 3-phosphate. It participates in polyol metabolism; myo-inositol biosynthesis; myo-inositol from D-glucose 6-phosphate: step 1/2. Its function is as follows. Key enzyme in myo-inositol biosynthesis pathway that catalyzes the conversion of glucose 6-phosphate to 1-myo-inositol 1-phosphate in a NAD-dependent manner. The protein is Inositol-3-phosphate synthase of Zea mays (Maize).